The following is a 218-amino-acid chain: Elongation factor Ts (218 aa).

The tract at residues 82-85 (TDFV) is involved in Mg(2+) ion dislocation from EF-Tu.

This sequence belongs to the EF-Ts family.

The protein resides in the cytoplasm. In terms of biological role, associates with the EF-Tu.GDP complex and induces the exchange of GDP to GTP. It remains bound to the aminoacyl-tRNA.EF-Tu.GTP complex up to the GTP hydrolysis stage on the ribosome. The sequence is that of Elongation factor Ts from Prochlorococcus marinus (strain MIT 9211).